The sequence spans 200 residues: uncharacterized protein (200 aa).

This is an uncharacterized protein from Haemophilus phage HP1 (strain HP1c1) (Bacteriophage HP1).